A 359-amino-acid chain; its full sequence is Photosystem II protein D1 2 (359 aa).

Helical transmembrane passes span Y29–T46, H118–L133, and W142–A156. H118 lines the chlorophyll a pocket. A pheophytin a-binding site is contributed by Y126. [CaMn4O5] cluster contacts are provided by D170 and E189. The chain crosses the membrane as a helical span at residues F197–L218. H198 is a binding site for chlorophyll a. A quinone contacts are provided by residues H215 and S264–F265. H215 lines the Fe cation pocket. Residue H272 coordinates Fe cation. Residues F274–L288 form a helical membrane-spanning segment. 4 residues coordinate [CaMn4O5] cluster: H332, E333, D342, and A344. A propeptide spanning residues A345–G359 is cleaved from the precursor.

It belongs to the reaction center PufL/M/PsbA/D family. As to quaternary structure, PSII is composed of 1 copy each of membrane proteins PsbA, PsbB, PsbC, PsbD, PsbE, PsbF, PsbH, PsbI, PsbJ, PsbK, PsbL, PsbM, PsbT, PsbX, PsbY, PsbZ, Psb30/Ycf12, peripheral proteins PsbO, CyanoQ (PsbQ), PsbU, PsbV and a large number of cofactors. It forms dimeric complexes. The D1/D2 heterodimer binds P680, chlorophylls that are the primary electron donor of PSII, and subsequent electron acceptors. It shares a non-heme iron and each subunit binds pheophytin, quinone, additional chlorophylls, carotenoids and lipids. D1 provides most of the ligands for the Mn4-Ca-O5 cluster of the oxygen-evolving complex (OEC). There is also a Cl(-1) ion associated with D1 and D2, which is required for oxygen evolution. The PSII complex binds additional chlorophylls, carotenoids and specific lipids. serves as cofactor. In terms of processing, tyr-161 forms a radical intermediate that is referred to as redox-active TyrZ, YZ or Y-Z. C-terminally processed by CtpA; processing is essential to allow assembly of the oxygen-evolving complex and thus photosynthetic growth.

Its subcellular location is the cellular thylakoid membrane. It carries out the reaction 2 a plastoquinone + 4 hnu + 2 H2O = 2 a plastoquinol + O2. Photosystem II (PSII) is a light-driven water:plastoquinone oxidoreductase that uses light energy to abstract electrons from H(2)O, generating O(2) and a proton gradient subsequently used for ATP formation. It consists of a core antenna complex that captures photons, and an electron transfer chain that converts photonic excitation into a charge separation. The D1/D2 (PsbA/PsbD) reaction center heterodimer binds P680, the primary electron donor of PSII as well as several subsequent electron acceptors. The chain is Photosystem II protein D1 2 from Synechococcus sp. (strain CC9311).